A 729-amino-acid polypeptide reads, in one-letter code: Probable ATP-dependent RNA helicase DDX17 (729 aa).

Residues 20 to 115 form a disordered region; sequence EAATVASATG…PPKKFGNPGE (96 aa). Ser64 carries the post-translational modification Phosphoserine. The segment covering 86 to 95 has biased composition (basic and acidic residues); the sequence is GDRDRDRDRG. Gly residues predominate over residues 96 to 105; it reads GFGARGGGGL. Lys108, Lys109, and Lys121 each carry N6-acetyllysine; by EP300. Lys129 is covalently cross-linked (Glycyl lysine isopeptide (Lys-Gly) (interchain with G-Cter in SUMO); alternate). A Glycyl lysine isopeptide (Lys-Gly) (interchain with G-Cter in SUMO1); alternate cross-link involves residue Lys129. A Glycyl lysine isopeptide (Lys-Gly) (interchain with G-Cter in SUMO2); alternate cross-link involves residue Lys129. Residues 171-199 carry the Q motif motif; the sequence is FAFHHANFPQYVMDVLMDQHFTEPTPIQC. The Helicase ATP-binding domain occupies 202–377; the sequence is FPLALSGRDM…EDFLRDYTQI (176 aa). 215–222 provides a ligand contact to ATP; the sequence is AQTGSGKT. A DEAD box motif is present at residues 325–328; sequence DEAD. The Helicase C-terminal domain maps to 405-552; sequence KLIQLMEEIM…AINPKLMQLV (148 aa). Thr523 carries the phosphothreonine modification. A Glycyl lysine isopeptide (Lys-Gly) (interchain with G-Cter in SUMO2) cross-link involves residue Lys528. Positions 547–729 are transactivation domain; sequence KLMQLVDHRG…PPPPPPPSRK (183 aa). Disordered regions lie at residues 551 to 623 and 659 to 729; these read LVDH…GSPN and TYGA…PSRK. Polar residues predominate over residues 568 to 578; sequence RTTSSANNPNL. Residues 583-610 are compositionally biased toward basic and acidic residues; the sequence is ECDRRLRGVKDGGRRDSASYRDRSETDR. Positions 659–688 are enriched in low complexity; it reads TYGASSTTSTGRSSQSSSQQFSGIGRSGQQ. Arg684 is subject to Omega-N-methylarginine. The segment covering 689–698 has biased composition (polar residues); it reads PQPLMSQQFA. The span at 717–729 shows a compositional bias: pro residues; sequence YPPPPPPPPPSRK. Residues 718-726 are interaction with YAP1; it reads PPPPPPPPP.

Belongs to the DEAD box helicase family. DDX5/DBP2 subfamily. In terms of assembly, interacts with DDX5 in an RNA-independent manner. Interacts with CDK9 transcription elongation complex under basal conditions. Following cell stimulation with poly(I:C), a synthetic double-stranded RNA mimicking viral infection, the interaction with CDK9 is decreased. Interacts with ESR1 in an estrogen-independent manner. Interacts with HNRNPH1; this interaction is important for the regulation of alternative splicing on G-quadruplex structures. At high, but not low, cell density, interacts with DROSHA and DGCR8, the core components of the microprocessor complex involved in the maturation of primary microRNAs (pri-miRNAs) into pre-miRNAs. The interaction with DGCR8 is reduced during mitosis. At low, but not high, cell density, interacts with YAP1 and with its paralog, WWTR1/TAZ. Interactions with DROSHA and YAP1 are mutually exclusive. In vitro, the pre-miRNA processing activity of the DDX17-containing microprocessor complex is weaker than that of the DROSHA/DGCR8 microprocessor complex devoid of DDX17. Interacts with UPF3B. Interacts with NFAT5; this interaction leads to DDX17 recruitment to LNC2 and S100A4 promoters and NFAT5-mediated DDX17-enhanced transactivation. Interacts with HDAC1, HDAC2 and HDAC3; this interaction with HDAC1 and HDAC3, but not HDAC2, depends upon DDX17 acetylation. Interacts with ZC3HAV1 (via N-terminal domain) in an RNA-independent manner. Interacts with EXOSC3/RRP40 and EXOSC5/RRP46; this interaction may be indirect and mediated by ZC3HAV1-binding. Interacts with EP300; this interaction leads to acetylation at lysine residues. Interacts with CREBBP/CBP and KAT2B/P/CAF. Directly interacts with CTNNB1. Interacts with MYOD1. Interacts with TP53. Interacts with DCP1A in an RNA-independent manner. Interacts with DCP2 in an RNA-dependent manner. Interacts with DHX36; this interaction occurs in a RNA-dependent manner. Interacts with ERCC6. In terms of processing, sumoylation significantly increases stability. It also promotes interaction specifically with HDAC1 (but not HDAC2, nor HDAC3) and strongly stimulates ESR1 and TP53 coactivation. Post-translationally, acetylation at lysine residues stabilizes the protein, stimulates interaction with HDAC1 and HDAC3, but not HDAC2, and represses ESR1 and TP53 coactivation activity. In terms of tissue distribution, widely expressed. Low expression, if any, in normal colonic epithelial cells (at protein level). Levels tend to increase during colon cancer progression, from very low in benign hyperplastic polyps to very high in tubular and villous adenomas.

It is found in the nucleus. The protein resides in the nucleolus. Its subcellular location is the cytoplasm. The protein localises to the cytosol. It catalyses the reaction ATP + H2O = ADP + phosphate + H(+). In terms of biological role, as an RNA helicase, unwinds RNA and alters RNA structures through ATP binding and hydrolysis. Involved in multiple cellular processes, including pre-mRNA splicing, alternative splicing, ribosomal RNA processing and miRNA processing, as well as transcription regulation. Regulates the alternative splicing of exons exhibiting specific features. For instance, promotes the inclusion of AC-rich alternative exons in CD44 transcripts. This function requires the RNA helicase activity. Affects NFAT5 and histone macro-H2A.1/MACROH2A1 alternative splicing in a CDK9-dependent manner. In NFAT5, promotes the introduction of alternative exon 4, which contains 2 stop codons and may target NFAT5 exon 4-containing transcripts to nonsense-mediated mRNA decay, leading to the down-regulation of NFAT5 protein. Affects splicing of mediators of steroid hormone signaling pathway, including kinases that phosphorylates ESR1, such as CDK2, MAPK1 and GSK3B, and transcriptional regulators, such as CREBBP, MED1, NCOR1 and NCOR2. By affecting GSK3B splicing, participates in ESR1 and AR stabilization. In myoblasts and epithelial cells, cooperates with HNRNPH1 to control the splicing of specific subsets of exons. In addition to binding mature mRNAs, also interacts with certain pri-microRNAs, including MIR663/miR-663a, MIR99B/miR-99b, and MIR6087/miR-6087. Binds pri-microRNAs on the 3' segment flanking the stem loop via the 5'-[ACG]CAUC[ACU]-3' consensus sequence. Required for the production of subsets of microRNAs, including MIR21 and MIR125B1. May be involved not only in microRNA primary transcript processing, but also stabilization. Participates in MYC down-regulation at high cell density through the production of MYC-targeting microRNAs. Along with DDX5, may be involved in the processing of the 32S intermediate into the mature 28S ribosomal RNA. Promoter-specific transcription regulator, functioning as a coactivator or corepressor depending on the context of the promoter and the transcriptional complex in which it exists. Enhances NFAT5 transcriptional activity. Synergizes with TP53 in the activation of the MDM2 promoter; this activity requires acetylation on lysine residues. May also coactivate MDM2 transcription through a TP53-independent pathway. Coactivates MMP7 transcription. Along with CTNNB1, coactivates MYC, JUN, FOSL1 and cyclin D1/CCND1 transcription. Alone or in combination with DDX5 and/or SRA1 non-coding RNA, plays a critical role in promoting the assembly of proteins required for the formation of the transcription initiation complex and chromatin remodeling leading to coactivation of MYOD1-dependent transcription. This helicase-independent activity is required for skeletal muscle cells to properly differentiate into myotubes. During epithelial-to-mesenchymal transition, coregulates SMAD-dependent transcriptional activity, directly controlling key effectors of differentiation, including miRNAs which in turn directly repress its expression. Plays a role in estrogen and testosterone signaling pathway at several levels. Mediates the use of alternative promoters in estrogen-responsive genes and regulates transcription and splicing of a large number of steroid hormone target genes. Contrary to splicing regulation activity, transcriptional coregulation of the estrogen receptor ESR1 is helicase-independent. Plays a role in innate immunity. Specifically restricts bunyavirus infection, including Rift Valley fever virus (RVFV) or La Crosse virus (LACV), but not vesicular stomatitis virus (VSV), in an interferon- and DROSHA-independent manner. Binds to RVFV RNA, likely via structured viral RNA elements. Promotes mRNA degradation mediated by the antiviral zinc-finger protein ZC3HAV1, in an ATPase-dependent manner. The protein is Probable ATP-dependent RNA helicase DDX17 (DDX17) of Homo sapiens (Human).